The chain runs to 579 residues: Thiol:disulfide interchange protein DsbD (579 aa).

A signal peptide spans 1 to 16; the sequence is MKKLFLFFTLIFTAFA. Intrachain disulfides connect Cys-124–Cys-129 and Cys-193–Cys-315. Transmembrane regions (helical) follow at residues 178–198, 230–250, 254–274, 296–316, 337–357, 376–396, 397–417, and 420–440; these read IFGF…LPML, LTYT…QIAL, YVMI…FGLF, GAFG…SPCT, AATL…ITLF, FGFV…PEVW, EPRL…LQMS, and GFGY…VQPL. In terms of domain architecture, Thioredoxin spans 449–579; the sequence is TTTQSAVENK…AFSNWLKALH (131 aa). The cysteines at positions 495 and 498 are disulfide-linked.

This sequence belongs to the thioredoxin family. DsbD subfamily.

The protein localises to the cell inner membrane. The catalysed reaction is [protein]-dithiol + NAD(+) = [protein]-disulfide + NADH + H(+). The enzyme catalyses [protein]-dithiol + NADP(+) = [protein]-disulfide + NADPH + H(+). Its function is as follows. Required to facilitate the formation of correct disulfide bonds in some periplasmic proteins and for the assembly of the periplasmic c-type cytochromes. Acts by transferring electrons from cytoplasmic thioredoxin to the periplasm. This transfer involves a cascade of disulfide bond formation and reduction steps. This Haemophilus influenzae (strain PittEE) protein is Thiol:disulfide interchange protein DsbD.